Reading from the N-terminus, the 235-residue chain is Large ribosomal subunit protein uL1 (235 aa).

This sequence belongs to the universal ribosomal protein uL1 family. In terms of assembly, part of the 50S ribosomal subunit.

Binds directly to 23S rRNA. The L1 stalk is quite mobile in the ribosome, and is involved in E site tRNA release. Its function is as follows. Protein L1 is also a translational repressor protein, it controls the translation of the L11 operon by binding to its mRNA. This is Large ribosomal subunit protein uL1 from Synechococcus sp. (strain WH7803).